A 308-amino-acid polypeptide reads, in one-letter code: MTKFRAAVVQAAPVPNDVEATIEKTINLIREAAARGANVAVFPEAFIGGYPKGANFNIHIGARTPEGRQEFADYRAGAIAVPGSETEQLAQAAHEAGLYLTIGVIERDGGTLYCTALYFTPDGLAGKHRKLMPTGAERLCWGFGDGSTLDTVQTPWGSMGAVICWENYMPLMRTAMYGKGIALYCAPTADDRDSWAATMRHIALEGRCFVLSACQYLTRKDFPESMGNRITDEPDAVLMRGGAIIVDPLGRVVAGPDYSGETILTADLDTDDIPRAQFDFDVVGHYARPDVFKLVVDEEPKSAVVTRA.

In terms of domain architecture, CN hydrolase spans 4–270; the sequence is FRAAVVQAAP…ETILTADLDT (267 aa). Catalysis depends on glutamate 44, which acts as the Proton acceptor. Lysine 130 is a catalytic residue. The active-site Nucleophile is cysteine 164.

Belongs to the carbon-nitrogen hydrolase superfamily. Nitrilase family.

The enzyme catalyses a nitrile + 2 H2O = a carboxylate + NH4(+). In terms of biological role, nitrilase that hydrolyzes preferentially phenylacetonitrile, but not (R,S)-mandelonitrile. Also acts on dinitriles like phenylenediacetonitriles (PDAs) 1,2-PDA, 1,3-PDA, and 1,4-PDA, and cyanophenyl acetonitriles (CPAs) 2-CPA and 4-CPA, but with lower activities. The protein is Aliphatic nitrilase (nit) of Sinorhizobium fredii (strain HH103).